The primary structure comprises 397 residues: 1-deoxy-D-xylulose 5-phosphate reductoisomerase (397 aa).

The NADPH site is built by threonine 17, glycine 18, serine 19, isoleucine 20, asparagine 47, and asparagine 130. Lysine 131 provides a ligand contact to 1-deoxy-D-xylulose 5-phosphate. Glutamate 132 contacts NADPH. Aspartate 156 is a binding site for Mn(2+). Residues serine 157, glutamate 158, serine 182, and histidine 205 each coordinate 1-deoxy-D-xylulose 5-phosphate. Residue glutamate 158 participates in Mn(2+) binding. Glycine 211 serves as a coordination point for NADPH. The 1-deoxy-D-xylulose 5-phosphate site is built by serine 218, asparagine 223, lysine 224, and glutamate 227. A Mn(2+)-binding site is contributed by glutamate 227.

The protein belongs to the DXR family. It depends on Mg(2+) as a cofactor. The cofactor is Mn(2+).

The enzyme catalyses 2-C-methyl-D-erythritol 4-phosphate + NADP(+) = 1-deoxy-D-xylulose 5-phosphate + NADPH + H(+). It functions in the pathway isoprenoid biosynthesis; isopentenyl diphosphate biosynthesis via DXP pathway; isopentenyl diphosphate from 1-deoxy-D-xylulose 5-phosphate: step 1/6. Catalyzes the NADPH-dependent rearrangement and reduction of 1-deoxy-D-xylulose-5-phosphate (DXP) to 2-C-methyl-D-erythritol 4-phosphate (MEP). In Rhizobium rhizogenes (strain K84 / ATCC BAA-868) (Agrobacterium radiobacter), this protein is 1-deoxy-D-xylulose 5-phosphate reductoisomerase.